The sequence spans 273 residues: 4-hydroxy-tetrahydrodipicolinate reductase (273 aa).

NAD(+) contacts are provided by residues G11–M16 and G106–T108. H162 (proton donor/acceptor) is an active-site residue. H163 serves as a coordination point for (S)-2,3,4,5-tetrahydrodipicolinate. K166 acts as the Proton donor in catalysis. Residue G172 to T173 coordinates (S)-2,3,4,5-tetrahydrodipicolinate.

This sequence belongs to the DapB family.

The protein localises to the cytoplasm. The catalysed reaction is (S)-2,3,4,5-tetrahydrodipicolinate + NAD(+) + H2O = (2S,4S)-4-hydroxy-2,3,4,5-tetrahydrodipicolinate + NADH + H(+). It catalyses the reaction (S)-2,3,4,5-tetrahydrodipicolinate + NADP(+) + H2O = (2S,4S)-4-hydroxy-2,3,4,5-tetrahydrodipicolinate + NADPH + H(+). The protein operates within amino-acid biosynthesis; L-lysine biosynthesis via DAP pathway; (S)-tetrahydrodipicolinate from L-aspartate: step 4/4. In terms of biological role, catalyzes the conversion of 4-hydroxy-tetrahydrodipicolinate (HTPA) to tetrahydrodipicolinate. The protein is 4-hydroxy-tetrahydrodipicolinate reductase of Synechococcus sp. (strain RCC307).